Consider the following 474-residue polypeptide: 6-phospho-beta-glucosidase AscB (474 aa).

Glu180 acts as the Proton donor in catalysis. Catalysis depends on Glu372, which acts as the Nucleophile.

The protein belongs to the glycosyl hydrolase 1 family.

The enzyme catalyses 6-phospho-beta-D-glucosyl-(1-&gt;4)-D-glucose + H2O = D-glucose 6-phosphate + D-glucose. Its function is as follows. Can hydrolyze salicin, cellobiose, and probably arbutin. This Escherichia coli (strain K12) protein is 6-phospho-beta-glucosidase AscB (ascB).